The sequence spans 185 residues: Elongation factor P (185 aa).

The protein belongs to the elongation factor P family.

The protein resides in the cytoplasm. The protein operates within protein biosynthesis; polypeptide chain elongation. Functionally, involved in peptide bond synthesis. Stimulates efficient translation and peptide-bond synthesis on native or reconstituted 70S ribosomes in vitro. Probably functions indirectly by altering the affinity of the ribosome for aminoacyl-tRNA, thus increasing their reactivity as acceptors for peptidyl transferase. The chain is Elongation factor P from Geobacillus kaustophilus (strain HTA426).